A 659-amino-acid polypeptide reads, in one-letter code: Threonine--tRNA ligase (659 aa).

Residues 7–70 (VQATVTVTFP…TDDATVEIIT (64 aa)) enclose the TGS domain. The catalytic stretch occupies residues 255-557 (DHRKLGAELE…LIEHTAGNFP (303 aa)). Residues C353, H404, and H534 each coordinate Zn(2+).

Belongs to the class-II aminoacyl-tRNA synthetase family. As to quaternary structure, homodimer. Zn(2+) is required as a cofactor.

It localises to the cytoplasm. The catalysed reaction is tRNA(Thr) + L-threonine + ATP = L-threonyl-tRNA(Thr) + AMP + diphosphate + H(+). In terms of biological role, catalyzes the attachment of threonine to tRNA(Thr) in a two-step reaction: L-threonine is first activated by ATP to form Thr-AMP and then transferred to the acceptor end of tRNA(Thr). Also edits incorrectly charged L-seryl-tRNA(Thr). The chain is Threonine--tRNA ligase from Chlorobium phaeobacteroides (strain BS1).